Reading from the N-terminus, the 297-residue chain is Acetyl-coenzyme A carboxylase carboxyl transferase subunit beta (297 aa).

Residues 25–294 (LWVKCPETGQ…VPPKGRLPAP (270 aa)) form the CoA carboxyltransferase N-terminal domain.

Belongs to the AccD/PCCB family. Acetyl-CoA carboxylase is a heterohexamer composed of biotin carboxyl carrier protein (AccB), biotin carboxylase (AccC) and two subunits each of ACCase subunit alpha (AccA) and ACCase subunit beta (AccD).

The protein resides in the cytoplasm. The enzyme catalyses N(6)-carboxybiotinyl-L-lysyl-[protein] + acetyl-CoA = N(6)-biotinyl-L-lysyl-[protein] + malonyl-CoA. It participates in lipid metabolism; malonyl-CoA biosynthesis; malonyl-CoA from acetyl-CoA: step 1/1. Its function is as follows. Component of the acetyl coenzyme A carboxylase (ACC) complex. Biotin carboxylase (BC) catalyzes the carboxylation of biotin on its carrier protein (BCCP) and then the CO(2) group is transferred by the transcarboxylase to acetyl-CoA to form malonyl-CoA. This is Acetyl-coenzyme A carboxylase carboxyl transferase subunit beta from Azorhizobium caulinodans (strain ATCC 43989 / DSM 5975 / JCM 20966 / LMG 6465 / NBRC 14845 / NCIMB 13405 / ORS 571).